We begin with the raw amino-acid sequence, 266 residues long: Integral membrane protein 2B (266 aa).

Over 1 to 54 the chain is Cytoplasmic; the sequence is MVKVTFNSALAQKEAKKDEPKSSEEALIAPPDAVAVDCKDPDDVVPVGQRRAWC. The chain crosses the membrane as a helical; Signal-anchor for type II membrane protein span at residues 55-75; that stretch reads WCMCFGLAFMLAGVILGGAYL. Residues 76–266 lie on the Lumenal side of the membrane; the sequence is YKYFALQPDD…KFAVETLICS (191 aa). The interval 102–134 is necessary for interaction with APP and inhibitor effects on APP processing; that stretch reads EPSADAPAARYQTIEENIKIFEEDAVEFISVPV. One can recognise a BRICHOS domain in the interval 137–231; that stretch reads FADSDPANIV…LCHDKETYKL (95 aa). 2 cysteine pairs are disulfide-bonded: C164–C223 and C248–C265. Residue N170 is glycosylated (N-linked (GlcNAc...) asparagine).

The protein belongs to the ITM2 family. In terms of assembly, homodimer; disulfide-linked. Interacts with SPPL2A and SPPL2B. Interacts with APP. Mature BRI2 (mBRI2) interacts with the APP amyloid-beta A4 protein; the interaction occurs at the cell surface and in the endocytic compartments and enable alpha- and beta-secretase-induced APP cleavage inhibition. Mature BRI2 (mBRI2) interacts with the APP C99; the interaction occurs in the endocytic compartments and enable gamma-secretase-induced C99 cleavage inhibition. May form heterodimers with Bri23 peptide and APP amyloid-beta protein 40. Interacts with ADAM7 in sperm; the interaction increases following capacitation. The ectodomain C-terminal part of the imBRI2 is processed by furin producing a secreted Bri23 peptide and a mature BRI2, membrane form (mBRI2). The remaining part of the ectodomain of mBRI2 containing the BRICHOS domain is cleaved by ADAM10 and is secreted (BRI2C, soluble form). The membrane-bound N-terminal fragment (BRI2C, membrane form) is further proteolytically processed by SPPL2A and SPPL2B through regulated intramembrane proteolysis producing a secreted C-peptide and a BRI2 intracellular domain (BRI2 ICD) released in the cytosol. Shedding by ADAM10 facilitates intramembrane cleavage but is not absolutely required for BRI2 ICD generation. Post-translationally, glycosylation at Asn-170 is important for cell surface localization, but doesn't affect furin- and ADAM10-induced proteolytic processing.

The protein resides in the golgi apparatus membrane. It localises to the cell membrane. Its subcellular location is the endosome membrane. It is found in the secreted. Plays a regulatory role in the processing of the amyloid-beta A4 precursor protein (APP) and acts as an inhibitor of the amyloid-beta peptide aggregation and fibrils deposition. Plays a role in the induction of neurite outgrowth. Functions as a protease inhibitor by blocking access of secretases to APP cleavage sites. In terms of biological role, mature BRI2 (mBRI2) functions as a modulator of the amyloid-beta A4 precursor protein (APP) processing leading to a strong reduction in the secretion of secretase-processed amyloid-beta protein 40 and amyloid-beta protein 42. Its function is as follows. Bri23 peptide prevents aggregation of APP amyloid-beta protein 42 into toxic oligomers. The chain is Integral membrane protein 2B (Itm2b) from Rattus norvegicus (Rat).